Here is a 421-residue protein sequence, read N- to C-terminus: UPF0415 protein C7orf25 (421 aa).

The protein belongs to the UPF0415 family.

This Homo sapiens (Human) protein is UPF0415 protein C7orf25 (C7orf25).